We begin with the raw amino-acid sequence, 332 residues long: Protein FAM9A (332 aa).

Positions 1 to 13 (MEPVGRKRSRKAA) are enriched in basic residues. Disordered regions lie at residues 1 to 114 (MEPV…EHTG) and 186 to 293 (QKDD…PTGV). Composition is skewed to basic and acidic residues over residues 74 to 91 (GKDP…FTET) and 98 to 114 (DEHG…EHTG). A compositionally biased stretch (low complexity) spans 196-217 (AAAAAAEAAAAAEAAAAAAEVI). The segment covering 218 to 275 (VVEDEEEEEKEEEEEKEEEEEEGEEEGGGEEGEEGGGGGEGEETEEEEEEEEEEEEEE) has biased composition (acidic residues). Residues 276–285 (QIKAFQEKQK) are compositionally biased toward basic and acidic residues.

This sequence belongs to the XLR/SYCP3 family. As to expression, expressed exclusively in testis.

It is found in the nucleus. Its subcellular location is the nucleolus. This chain is Protein FAM9A, found in Homo sapiens (Human).